The chain runs to 204 residues: Protein Mis18-alpha (204 aa).

A phosphoserine mark is found at S13, S16, and S17. One can recognise a Mis18 domain in the interval 51–149; it reads PLVFLCARCR…SVEAVESYTL (99 aa). Zn(2+) contacts are provided by C56, C59, C112, and C115. K133 is covalently cross-linked (Glycyl lysine isopeptide (Lys-Gly) (interchain with G-Cter in SUMO2)). S204 carries the phosphoserine modification.

This sequence belongs to the mis18 family. As to quaternary structure, homodimer, and heterodimer with OIP5/MIS18B. Identified in a complex containing MIS18A, OIP5/MIS18B, MIS18BP1, RBBP7 and RBBP4.

It localises to the nucleus. It is found in the chromosome. Its subcellular location is the centromere. Its function is as follows. Required for recruitment of CENPA to centromeres and normal chromosome segregation during mitosis. The polypeptide is Protein Mis18-alpha (Mis18a) (Mus musculus (Mouse)).